We begin with the raw amino-acid sequence, 106 residues long: ATP-dependent Clp protease adapter protein ClpS (106 aa).

It belongs to the ClpS family. As to quaternary structure, binds to the N-terminal domain of the chaperone ClpA.

In terms of biological role, involved in the modulation of the specificity of the ClpAP-mediated ATP-dependent protein degradation. The sequence is that of ATP-dependent Clp protease adapter protein ClpS from Salmonella gallinarum (strain 287/91 / NCTC 13346).